The chain runs to 412 residues: D-nopaline dehydrogenase (412 aa).

The protein belongs to the lysopine/nopaline/octopine/opine/vitopine dehydrogenases family. As to quaternary structure, homotetramer.

It carries out the reaction D-nopaline + NADP(+) + H2O = L-arginine + 2-oxoglutarate + NADPH + H(+). This chain is D-nopaline dehydrogenase (nos), found in Agrobacterium vitis (Rhizobium vitis).